Consider the following 521-residue polypeptide: Glutamate--tRNA ligase (521 aa).

Positions 30–40 (PSPTGYLHVGG) match the 'HIGH' region motif. The short motif at 277-281 (KLSKR) is the 'KMSKS' region element. An ATP-binding site is contributed by lysine 280.

Belongs to the class-I aminoacyl-tRNA synthetase family. Glutamate--tRNA ligase type 1 subfamily. As to quaternary structure, monomer.

The protein resides in the cytoplasm. The catalysed reaction is tRNA(Glu) + L-glutamate + ATP = L-glutamyl-tRNA(Glu) + AMP + diphosphate. Functionally, catalyzes the attachment of glutamate to tRNA(Glu) in a two-step reaction: glutamate is first activated by ATP to form Glu-AMP and then transferred to the acceptor end of tRNA(Glu). The polypeptide is Glutamate--tRNA ligase (Chlorobium phaeovibrioides (strain DSM 265 / 1930) (Prosthecochloris vibrioformis (strain DSM 265))).